We begin with the raw amino-acid sequence, 93 residues long: U12-lycotoxin-Ls1c (93 aa).

The signal sequence occupies residues 1 to 18 (MKFAVILLFSLVVLAVAS). Positions 19-38 (ESVEEVRREIDIEDLPEQQR) are excised as a propeptide.

Belongs to the neurotoxin 31 family. In terms of processing, contains 5 disulfide bonds. As to expression, expressed by the venom gland.

It localises to the secreted. This Lycosa singoriensis (Wolf spider) protein is U12-lycotoxin-Ls1c.